We begin with the raw amino-acid sequence, 230 residues long: uncharacterized protein (230 aa).

Residues 1–57 (MPGPHSPNPGVGTNGPAPYPEPSSHEPQALDYPHDLGAAEPAFAPGPADDAALPPAA) are disordered. The span at 38 to 55 (AAEPAFAPGPADDAALPP) shows a compositional bias: low complexity. Residues 75-95 (LLIGIVVALALVSAMTAAIIY) form a helical membrane-spanning segment.

It localises to the membrane. This is an uncharacterized protein from Mycobacterium tuberculosis (strain CDC 1551 / Oshkosh).